Here is a 738-residue protein sequence, read N- to C-terminus: Interleukin-17 receptor D (738 aa).

An N-terminal signal peptide occupies residues 1–16; sequence MAPWLQLCSFFFTVNA. Topologically, residues 17–299 are extracellular; sequence CLNGSQLAVA…VQSPWAGPIR (283 aa). 8 N-linked (GlcNAc...) asparagine glycosylation sites follow: asparagine 19, asparagine 55, asparagine 62, asparagine 80, asparagine 137, asparagine 171, asparagine 206, and asparagine 277. Residues 300–320 form a helical membrane-spanning segment; it reads AVAITVPLVVISAFATLFTVM. Over 321–738 the chain is Cytoplasmic; that stretch reads CRKKQQENIY…TDELQALAPL (418 aa). The SEFIR domain maps to 355–509; it reads QPKVFLCYSN…LMDHLPELCA (155 aa). Residues 653-738 form a disordered region; sequence GSPSEMPRDS…TDELQALAPL (86 aa). Residues 667-702 show a composition bias toward low complexity; it reads SSVPSSELSLPLMEGLSPDQIETSSLTESVSSSSGL. Over residues 720-731 the composition is skewed to basic and acidic residues; that stretch reads SREHGCHSHTDE.

Self-associates. Interacts with FGFR2 and phosphorylated MAP2K1 or MAP2K2. Associates with a MAP2K1/2-MAPK1/3 complex. Interacts with FGFR1 and MAP3K7.

The protein resides in the golgi apparatus membrane. The protein localises to the cell membrane. Functionally, feedback inhibitor of fibroblast growth factor mediated Ras-MAPK signaling and ERK activation. Regulates the nuclear ERK signaling pathway by spatially blocking nuclear translocation of activated ERK. Mediates JNK activation and may be involved in apoptosis. May inhibit FGF-induced FGFR1 tyrosine phosphorylation. Might have a role in the early stages of fate specification of GnRH-secreting neurons. Inhibits TGFB-induced epithelial-to-mesenchymal transition in lens epithelial cells. The sequence is that of Interleukin-17 receptor D (Il17rd) from Mus musculus (Mouse).